The sequence spans 65 residues: Photosystem II reaction center protein J (65 aa).

The segment covering 1 to 17 (MSTKLKGPDGRIPDRLP) has biased composition (basic and acidic residues). The interval 1–20 (MSTKLKGPDGRIPDRLPDGT) is disordered. Residues 36–56 (LWLVATVGGMAVLSVLGLFFF) traverse the membrane as a helical segment.

Belongs to the PsbJ family. PSII is composed of 1 copy each of membrane proteins PsbA, PsbB, PsbC, PsbD, PsbE, PsbF, PsbH, PsbI, PsbJ, PsbK, PsbL, PsbM, PsbT, PsbX, PsbY, Psb30/Ycf12, peripheral proteins PsbO, CyanoQ (PsbQ), PsbU, PsbV and a large number of cofactors. It forms dimeric complexes.

The protein resides in the cellular thylakoid membrane. One of the components of the core complex of photosystem II (PSII). PSII is a light-driven water:plastoquinone oxidoreductase that uses light energy to abstract electrons from H(2)O, generating O(2) and a proton gradient subsequently used for ATP formation. It consists of a core antenna complex that captures photons, and an electron transfer chain that converts photonic excitation into a charge separation. This Prochlorococcus marinus (strain MIT 9303) protein is Photosystem II reaction center protein J.